A 299-amino-acid chain; its full sequence is Sulfate adenylyltransferase subunit 2 (299 aa).

The protein belongs to the PAPS reductase family. CysD subfamily. As to quaternary structure, heterodimer composed of CysD, the smaller subunit, and CysN.

It carries out the reaction sulfate + ATP + H(+) = adenosine 5'-phosphosulfate + diphosphate. The protein operates within sulfur metabolism; hydrogen sulfide biosynthesis; sulfite from sulfate: step 1/3. Its function is as follows. With CysN forms the ATP sulfurylase (ATPS) that catalyzes the adenylation of sulfate producing adenosine 5'-phosphosulfate (APS) and diphosphate, the first enzymatic step in sulfur assimilation pathway. APS synthesis involves the formation of a high-energy phosphoric-sulfuric acid anhydride bond driven by GTP hydrolysis by CysN coupled to ATP hydrolysis by CysD. The sequence is that of Sulfate adenylyltransferase subunit 2 from Colwellia psychrerythraea (strain 34H / ATCC BAA-681) (Vibrio psychroerythus).